Reading from the N-terminus, the 663-residue chain is MFRPEEMVKLEVITLNRYKDTLLTYLHEAGAVEVREVKVELAQKDTPNEYHRKAASYSISMSRLVEFLGTYRKAAGGGIKEFFFPKEKPKRTYRYERLEKLIKDVEEFLGKVEPEIKAIEGRMNSLSTEIERIKEQIGILDILTPLNIDVSYLRHCGVVEVTVGLVDRTRVKELADALKKETENHVAIITKEASDKALVVIVNLARDHDKVNTLLAKFSVEKLEIPEGEGTPKELMKEYSKKLAEKEKELEEAKKEASKLAEKYYDDVLFYKELVDNERDKSTVLPMLARTNMTFALTGWVPRPDVQKILEGIKRITEGKAYINVREPRKEELEEMPVKLKNPGWARPFEMLTEMYGVPRHDEIDPTPIIAFTYSFFFGFMLTDFLYGLIVGIVAALLVKGHKKFNDGTYKFAYILLWSAFFTMLLGALFGSYFGNAADIMLQYITGDQNAHAWRLLDPLREPMPMLLAALAIGLAHLFLGYTLGFVIKWKNGDRKGAVFEQLPWMIIIIGVALLASQREGLDAAAKAILGTGIALFAVGELVINGGLAALMIISDFFGFVGNWLSYARLMALALATGGIAMVINVLVGMVWAIKFLYIGPIIGLIIFFGGQLFSTAINALGAFVHALRLHYVEFFGTFYSGEGKRFEPFKSKREVSKLELEV.

A run of 7 helical transmembrane segments spans residues 376–396 (FFFG…IVAA), 412–432 (FAYI…LFGS), 468–488 (LAAL…GFVI), 497–517 (GAVF…LLAS), 534–554 (IALF…LMII), 568–588 (ARLM…NVLV), and 589–609 (GMVW…IIFF).

It belongs to the V-ATPase 116 kDa subunit family. In terms of assembly, has multiple subunits with at least A(3), B(3), C, D, E, F, H, I and proteolipid K(x).

It is found in the cell membrane. Component of the A-type ATP synthase that produces ATP from ADP in the presence of a proton gradient across the membrane. This is A-type ATP synthase subunit I from Thermococcus kodakarensis (strain ATCC BAA-918 / JCM 12380 / KOD1) (Pyrococcus kodakaraensis (strain KOD1)).